The following is a 208-amino-acid chain: Uracil phosphoribosyltransferase (208 aa).

Residues arginine 78, arginine 103, and 130–138 contribute to the 5-phospho-alpha-D-ribose 1-diphosphate site; that span reads DPMLATGGS. Uracil is bound by residues isoleucine 193 and 198–200; that span reads GDA. Residue aspartate 199 coordinates 5-phospho-alpha-D-ribose 1-diphosphate.

The protein belongs to the UPRTase family. The cofactor is Mg(2+).

The enzyme catalyses UMP + diphosphate = 5-phospho-alpha-D-ribose 1-diphosphate + uracil. It participates in pyrimidine metabolism; UMP biosynthesis via salvage pathway; UMP from uracil: step 1/1. With respect to regulation, allosterically activated by GTP. Its function is as follows. Catalyzes the conversion of uracil and 5-phospho-alpha-D-ribose 1-diphosphate (PRPP) to UMP and diphosphate. This is Uracil phosphoribosyltransferase from Proteus mirabilis (strain HI4320).